We begin with the raw amino-acid sequence, 512 residues long: Probable DNA ligase (512 aa).

Glutamate 208 lines the ATP pocket. Lysine 210 functions as the N6-AMP-lysine intermediate in the catalytic mechanism. Positions 215, 230, 259, 299, 374, and 380 each coordinate ATP.

Belongs to the ATP-dependent DNA ligase family. The cofactor is Mg(2+).

The enzyme catalyses ATP + (deoxyribonucleotide)n-3'-hydroxyl + 5'-phospho-(deoxyribonucleotide)m = (deoxyribonucleotide)n+m + AMP + diphosphate.. In terms of biological role, DNA ligase that seals nicks in double-stranded DNA during DNA replication, DNA recombination and DNA repair. The protein is Probable DNA ligase of Streptomyces avermitilis (strain ATCC 31267 / DSM 46492 / JCM 5070 / NBRC 14893 / NCIMB 12804 / NRRL 8165 / MA-4680).